A 260-amino-acid chain; its full sequence is Methylesterase 7 (260 aa).

S84 (acyl-ester intermediate) is an active-site residue. Catalysis depends on charge relay system residues D210 and H238.

This sequence belongs to the AB hydrolase superfamily. Methylesterase family.

It carries out the reaction methyl (indol-3-yl)acetate + H2O = (indol-3-yl)acetate + methanol + H(+). The enzyme catalyses methyl salicylate + H2O = salicylate + methanol + H(+). It participates in plant hormone biosynthesis. With respect to regulation, esterase activity is down-regulated by salicylic acid (SA). Its function is as follows. Methylesterase shown to have carboxylesterase activity, methyl indole-3-acetic acid (MeIAA) esterase activity and methyl salicylate (MeSA) esterase activity in vitro. Required to convert methyl salicylate (MeSA) to salicylic acid (SA) as part of the signal transduction pathways that activate systemic acquired resistance in systemic tissue. MeSA is believed to be an inactive form that needs to be demethylated to exert a biological effect. The chain is Methylesterase 7 from Arabidopsis thaliana (Mouse-ear cress).